Here is a 258-residue protein sequence, read N- to C-terminus: Microtubule-associated protein RP/EB family member 1 (258 aa).

One can recognise a Calponin-homology (CH) domain in the interval 14–116 (NLSRHDMLAW…FVQWFKKFFD (103 aa)). The region spanning 175–245 (KKAAGDDESA…LYATDEGFVI (71 aa)) is the EB1 C-terminal domain.

It belongs to the MAPRE family.

It is found in the cytoplasm. The protein resides in the cytoskeleton. The protein localises to the microtubule organizing center. It localises to the centrosome. Its subcellular location is the golgi apparatus. It is found in the spindle. The protein resides in the spindle pole. Its function is as follows. Plus-end tracking protein (+TIP) that binds to the plus-end of microtubules and regulates the dynamics of the microtubule cytoskeleton. Promotes cytoplasmic microtubule nucleation and elongation. Involved in mitotic spindle positioning by stabilizing microtubules and promoting dynamic connection between astral microtubules and the cortex during mitotic chromosome segregation. The chain is Microtubule-associated protein RP/EB family member 1 (MAPRE1) from Gallus gallus (Chicken).